A 101-amino-acid chain; its full sequence is NADH-quinone oxidoreductase subunit K (101 aa).

3 helical membrane-spanning segments follow: residues 4–24 (LSDYLILSSVIFCIGLVGIFV), 29–49 (IITLLMCVELILVAVNTNFVA), and 61–81 (IFVFFILTVAAAEVAIGLAIL).

The protein belongs to the complex I subunit 4L family. NDH-1 is composed of 14 different subunits. Subunits NuoA, H, J, K, L, M, N constitute the membrane sector of the complex.

The protein localises to the cell inner membrane. It carries out the reaction a quinone + NADH + 5 H(+)(in) = a quinol + NAD(+) + 4 H(+)(out). NDH-1 shuttles electrons from NADH, via FMN and iron-sulfur (Fe-S) centers, to quinones in the respiratory chain. The immediate electron acceptor for the enzyme in this species is believed to be ubiquinone. Couples the redox reaction to proton translocation (for every two electrons transferred, four hydrogen ions are translocated across the cytoplasmic membrane), and thus conserves the redox energy in a proton gradient. This chain is NADH-quinone oxidoreductase subunit K, found in Ruthia magnifica subsp. Calyptogena magnifica.